A 115-amino-acid chain; its full sequence is MRIKVGETVAILAGKDRYFIDENGQRKVKTGKVLKIFNEKQRIIVEGVNMKTKHHPPSKDQEKGSITKQEGSIHISNVALIDPKTQTPTKIGIRFKKGKKIRYAKKSNNQLDDIV.

Residues N49 to K68 form a disordered region.

This sequence belongs to the universal ribosomal protein uL24 family. Part of the 50S ribosomal subunit.

Its function is as follows. One of two assembly initiator proteins, it binds directly to the 5'-end of the 23S rRNA, where it nucleates assembly of the 50S subunit. One of the proteins that surrounds the polypeptide exit tunnel on the outside of the subunit. In Phytoplasma australiense, this protein is Large ribosomal subunit protein uL24.